The sequence spans 154 residues: Small ribosomal subunit protein uS9 (154 aa).

A disordered region spans residues 135–154 (KESKKYGLKKARKAPQYSKR). A compositionally biased stretch (basic residues) spans 140–154 (YGLKKARKAPQYSKR).

It belongs to the universal ribosomal protein uS9 family.

This chain is Small ribosomal subunit protein uS9, found in Salinispora arenicola (strain CNS-205).